Here is a 157-residue protein sequence, read N- to C-terminus: Cell cycle control protein 50C (157 aa).

Residues M1 to R34 lie on the Cytoplasmic side of the membrane. Residues V35–L55 form a helical membrane-spanning segment. Residues S56–V157 are Extracellular-facing. N66 carries an N-linked (GlcNAc...) asparagine glycan.

Belongs to the CDC50/LEM3 family.

Its subcellular location is the membrane. In Pan troglodytes (Chimpanzee), this protein is Cell cycle control protein 50C (TMEM30C).